Consider the following 179-residue polypeptide: Probable DNA-directed RNA polymerase subunit delta (179 aa).

Residues 14 to 81 (MSLVELAYEI…GDQRWGLRSW (68 aa)) enclose the HTH HARE-type domain. The interval 108 to 179 (VVEEDFDEIE…DDLDDNEEEK (72 aa)) is disordered. Residues 109 to 179 (VEEDFDEIEE…DDLDDNEEEK (71 aa)) are compositionally biased toward acidic residues.

The protein belongs to the RpoE family. In terms of assembly, RNAP is composed of a core of 2 alpha, a beta and a beta' subunits. The core is associated with a delta subunit and one of several sigma factors.

Its function is as follows. Participates in both the initiation and recycling phases of transcription. In the presence of the delta subunit, RNAP displays an increased specificity of transcription, a decreased affinity for nucleic acids, and an increased efficiency of RNA synthesis because of enhanced recycling. The chain is Probable DNA-directed RNA polymerase subunit delta from Bacillus pumilus (strain SAFR-032).